We begin with the raw amino-acid sequence, 234 residues long: MKKIIVAIDGYSACGKSTTAKILAAKLGYVYIDTGAMYRSVALYFIQHYINSTNPKAVAEALNQIHISFVHNNKTETCETYLNGLNVESEIRKMYVSEKVSEVSAIPEVRKRMVELQQKMARKRGVVMDGRDIGTHVFPDAELKIFMVADMHVRAFRRQQELFERKQIIDLDDIIKNIESRDLMDTTREESPLRKASDAYEIDTTYITVEEQVDCIMNIAVGKMIELEYNIENI.

10 to 18 (GYSACGKST) contributes to the ATP binding site.

The protein belongs to the cytidylate kinase family. Type 1 subfamily.

It is found in the cytoplasm. It catalyses the reaction CMP + ATP = CDP + ADP. The enzyme catalyses dCMP + ATP = dCDP + ADP. In Cytophaga hutchinsonii (strain ATCC 33406 / DSM 1761 / CIP 103989 / NBRC 15051 / NCIMB 9469 / D465), this protein is Cytidylate kinase.